Here is a 249-residue protein sequence, read N- to C-terminus: MKILVCENYDKLSEKAAQIIMSQITLKSNSILGLATGSTPIGMYKKLVEMYENKMIDFSDVKTFNLDEYQNLPISNDQSYHYFMDDNLFNYINVKRENIYIPNGMANDIENECIKYDNLIKEAGGIDIQVLGIGNNAHIGFNEPTVNFEKKTYVVELEESTKIANARFFNSLDEVPSKAITMGIGSIFESKKIMLLATGENKAKAIYDTIYGKVTPEVPASILQFHDDLIVILDKEAASLLNPKDYKVV.

The Proton acceptor; for enolization step role is filled by D67. N136 (for ring-opening step) is an active-site residue. H138 functions as the Proton acceptor; for ring-opening step in the catalytic mechanism. The active-site For ring-opening step is the E143.

It belongs to the glucosamine/galactosamine-6-phosphate isomerase family. NagB subfamily.

It carries out the reaction alpha-D-glucosamine 6-phosphate + H2O = beta-D-fructose 6-phosphate + NH4(+). Its pathway is amino-sugar metabolism; N-acetylneuraminate degradation; D-fructose 6-phosphate from N-acetylneuraminate: step 5/5. Catalyzes the reversible isomerization-deamination of glucosamine 6-phosphate (GlcN6P) to form fructose 6-phosphate (Fru6P) and ammonium ion. In Clostridium botulinum (strain Eklund 17B / Type B), this protein is Glucosamine-6-phosphate deaminase.